Consider the following 438-residue polypeptide: Coenzyme A disulfide reductase (438 aa).

8–33 (GAVAGGATCASQIRRLDKESEIIVFE) serves as a coordination point for FAD. Substrate is bound by residues Thr15, Gln19, Arg22, Ser39, and Asn42. The active-site Nucleophile is the Cys43. Cys43 functions as the Redox-active in the catalytic mechanism. Substrate is bound at residue Lys71. 151–166 (ALVVGAGYISLEVLEN) is a binding site for NADP(+). Position 267–277 (267–277 (TNIPNIYALGD)) interacts with FAD. His299 provides a ligand contact to substrate. Tyr419 provides a ligand contact to FAD. Position 427 (Lys427) interacts with substrate.

The protein belongs to the class-III pyridine nucleotide-disulfide oxidoreductase family. Homodimer. FAD serves as cofactor.

The catalysed reaction is NADP(+) + 2 CoA = CoA-disulfide + NADPH + H(+). Functionally, catalyzes specifically the NADPH-dependent reduction of coenzyme A disulfide. The protein is Coenzyme A disulfide reductase of Staphylococcus epidermidis (strain ATCC 35984 / DSM 28319 / BCRC 17069 / CCUG 31568 / BM 3577 / RP62A).